The following is a 52-amino-acid chain: Lantibiotic epidermin (52 aa).

A propeptide spanning residues 1 to 30 (MEAVKEKNDLFNLDVKVNAKESNDSGAEPR) is cleaved from the precursor. The lanthionine (Ser-Cys) cross-link spans 33–37 (SKFIC). The beta-methyllanthionine (Thr-Cys) cross-link spans 38-41 (TPGC). Thr-44 carries the post-translational modification (Z)-2,3-didehydrobutyrine. Residues 46–51 (SFNSYC) constitute a cross-link (lanthionine (Ser-Cys)). Positions 49 to 52 (SYCC) form a cross-link, S-(2-aminovinyl)-D-cysteine (Ser-Cys).

Belongs to the type A lantibiotic family. Post-translationally, maturation of lantibiotics involves the enzymatic conversion of Thr, and Ser into dehydrated AA and the formation of thioether bonds with cysteine. The C-terminal lanthionine undergoes decarboxylation. This is followed by membrane translocation and cleavage of the modified precursor. In terms of processing, the 2,3-didehydrobutyrine is determined to be the Z-isomer.

Functionally, lanthionine-containing peptide antibiotic (lantibiotic) active on Gram-positive bacteria. The bactericidal activity of lantibiotics is based on depolarization of energized bacterial cytoplasmic membranes, initiated by the formation of aqueous transmembrane pores. The sequence is that of Lantibiotic epidermin (epiA) from Staphylococcus epidermidis.